Consider the following 305-residue polypeptide: Ribosomal RNA small subunit methyltransferase H (305 aa).

Residues 30-32 (GGH), D49, F74, D96, and Q103 contribute to the S-adenosyl-L-methionine site.

The protein belongs to the methyltransferase superfamily. RsmH family.

The protein localises to the cytoplasm. It carries out the reaction cytidine(1402) in 16S rRNA + S-adenosyl-L-methionine = N(4)-methylcytidine(1402) in 16S rRNA + S-adenosyl-L-homocysteine + H(+). In terms of biological role, specifically methylates the N4 position of cytidine in position 1402 (C1402) of 16S rRNA. The protein is Ribosomal RNA small subunit methyltransferase H of Francisella tularensis subsp. holarctica (strain LVS).